A 518-amino-acid polypeptide reads, in one-letter code: Glutamate--cysteine ligase (518 aa).

Belongs to the glutamate--cysteine ligase type 1 family. Type 1 subfamily.

The catalysed reaction is L-cysteine + L-glutamate + ATP = gamma-L-glutamyl-L-cysteine + ADP + phosphate + H(+). The protein operates within sulfur metabolism; glutathione biosynthesis; glutathione from L-cysteine and L-glutamate: step 1/2. The polypeptide is Glutamate--cysteine ligase (Escherichia coli O157:H7).